The sequence spans 1448 residues: Protein clueless (1448 aa).

Disordered regions lie at residues 1–96, 110–129, and 265–286; these read MALE…HAEK, NANV…ADGD, and RTRP…VSDP. 2 stretches are compositionally biased toward low complexity: residues 9–26 and 41–66; these read NSNA…TKAS and NLNP…ADGP. A compositionally biased stretch (basic residues) spans 68 to 77; sequence AKKKGKKNRN. A compositionally biased stretch (polar residues) spans 78–88; the sequence is KSPTEPTTEAV. Phosphoserine is present on serine 270. One can recognise a Clu domain in the interval 424–666; sequence RAEDAFSSKL…RTFPPDVNFL (243 aa). Disordered regions lie at residues 726–773, 958–1010, and 1414–1448; these read SEKS…SGEA, AVSS…SASD, and GEAE…ATSS. Over residues 748 to 769 the composition is skewed to basic and acidic residues; the sequence is GAEKPDDKEKKNEEEEKKERST. The segment covering 966–981 has biased composition (basic residues); it reads KKRGNGGKHNKHKSSK. A compositionally biased stretch (low complexity) spans 986 to 1007; that stretch reads QQQQQTTGNQNGSSSGSSNSSS. A compositionally biased stretch (basic and acidic residues) spans 1419–1429; the sequence is AVSKDIKEQPE.

This sequence belongs to the CLU family.

It localises to the cytoplasm. MRNA-binding protein involved in proper cytoplasmic distribution of mitochondria. This is Protein clueless from Drosophila melanogaster (Fruit fly).